The sequence spans 508 residues: Vacuolar serine-type carboxypeptidase ATG42 (508 aa).

The signal sequence occupies residues 1–24 (MKYLNLVFVLQLLISIKYASFGRA). Cystine bridges form between cysteine 132/cysteine 375, cysteine 267/cysteine 281, cysteine 291/cysteine 314, cysteine 298/cysteine 307, and cysteine 336/cysteine 345. A glycan (N-linked (GlcNAc...) asparagine) is linked at asparagine 163. The active site involves serine 219. Residue asparagine 242 is glycosylated (N-linked (GlcNAc...) asparagine). 2 N-linked (GlcNAc...) asparagine glycosylation sites follow: asparagine 339 and asparagine 371. Aspartate 415 is an active-site residue. Cysteine 418 is a binding site for substrate. Residue histidine 474 is part of the active site. Methionine 475 provides a ligand contact to substrate.

This sequence belongs to the peptidase S10 family.

It is found in the vacuole lumen. It carries out the reaction Release of a C-terminal amino acid with broad specificity.. In terms of biological role, vacuolar serine-type carboxypeptidase involved in vacuolar zymogen activation, breakdown of the autophagic body, and autophagosome-dependent protein synthesis. Plays a key role in phytochelatin (PC) synthesis from glutathione (GSH) by cleaving the Gly from GSH and form the PC-peptides of the structure (gamma-Glu-Cys)2-Gly. Also involved in resistance to xenobiotics via the degradation of glutathione-S-conjugates. The sequence is that of Vacuolar serine-type carboxypeptidase ATG42 from Saccharomyces cerevisiae (strain ATCC 204508 / S288c) (Baker's yeast).